The sequence spans 397 residues: Lymphoid enhancer-binding factor 1 (397 aa).

The CTNNB1-binding stretch occupies residues 1–60 (MPQLSGGGGGGDPELCATDEMIPFKDEGDPQKEKIFAEISHPEEEGDLADIKSSLVNESE). Residue Lys-25 forms a Glycyl lysine isopeptide (Lys-Gly) (interchain with G-Cter in SUMO) linkage. A disordered region spans residues 59-102 (SEIIPASNGHEVVRQAPSSQEPYHDKAREHPDEGKHPDGGLYNK). Residues 80–96 (PYHDKAREHPDEGKHPD) show a composition bias toward basic and acidic residues. Ser-130 is subject to Phosphoserine. Position 153 is a phosphothreonine; by NLK (Thr-153). Phosphoserine; by NLK is present on Ser-164. Disordered stretches follow at residues 164–191 (SPGSHPSHIPSDVNSKQGMSRHPPAPEI) and 266–296 (VKQEHPHTDSDLMHVKPQHEQRKEQEPKRPH). Lys-267 is covalently cross-linked (Glycyl lysine isopeptide (Lys-Gly) (interchain with G-Cter in SUMO)). Residues 267 to 294 (KQEHPHTDSDLMHVKPQHEQRKEQEPKR) show a composition bias toward basic and acidic residues. A DNA-binding region (HMG box) is located at residues 297-365 (IKKPLNAFML…LHMQLYPGWS (69 aa)). Positions 367 to 397 (RDNYGKKKKRKREKLQESTSGTGPRMTAAYI) are disordered.

Belongs to the TCF/LEF family. Binds the armadillo repeat of CTNNB1 and forms a stable complex. Binds TLE1, ALYREF/THOC4, MDFI and MDFIC. Interacts with NLK. Interacts with EP300 and PIASG. Interacts with DAZAP2. Phosphorylated at Thr-153 and/or Ser-164 by NLK. Phosphorylation by NLK at these sites represses LEF1-mediated transcriptional activation of target genes of the canonical Wnt signaling pathway. In terms of tissue distribution, expressed in Vgamma1.1 and Vgamma2 gamma-delta T-cells, however not expressed in gamma-delta thymocytes fated for Il17a expression (at protein level). Expressed in alpha-beta T-cell lineages. Expressed in the thymus. Found in distinct epithelial cell compartments of the skin and is abundant in the hair-producing progenitors of the follicle.

The protein resides in the nucleus. In terms of biological role, transcription factor that binds DNA in a sequence-specific manner. Participates in the Wnt signaling pathway. Activates transcription of target genes in the presence of CTNNB1 and EP300. PIASG antagonizes both Wnt-dependent and Wnt-independent activation by LEF1. TLE1, TLE2, TLE3 and TLE4 repress transactivation mediated by LEF1 and CTNNB1. Regulates T-cell receptor alpha enhancer function. Required for IL17A expressing gamma-delta T-cell maturation and development, via binding to regulator loci of BLK to modulate expression. Acts as a positive regulator of odontoblast differentiation during mesenchymal tooth germ formation, expression is repressed during the bell stage by MSX1-mediated inhibition of CTNNB1 signaling. May play a role in hair cell differentiation and follicle morphogenesis. The sequence is that of Lymphoid enhancer-binding factor 1 from Mus musculus (Mouse).